The following is a 494-amino-acid chain: Glycosyl hydrolase family 109 protein (494 aa).

Disordered stretches follow at residues 1–35 and 59–86; these read MNDAAPQNPGQDEAKGTGEKDNGGSMSPRSALRTT and EAAQTAVPAAESDESAAPKRQGRTMAGV. Residues 1–55 constitute a signal peptide (tat-type signal); it reads MNDAAPQNPGQDEAKGTGEKDNGGSMSPRSALRTTAGVAGAGLGLSALGTGTASA. Positions 12–22 are enriched in basic and acidic residues; sequence DEAKGTGEKDN. NAD(+)-binding positions include 103–104, Asp125, 174–177, 194–195, and Asn223; these read NR, WDFH, and EC. Substrate contacts are provided by residues Tyr252, Arg271, 283–286, and Tyr365; that span reads YPNH. Tyr283 contributes to the NAD(+) binding site. Residues 463-494 are disordered; the sequence is KANGKPQQIPDFTRGEWKKSRPGTDSEKPSEP. Residues 475 to 494 show a composition bias toward basic and acidic residues; sequence TRGEWKKSRPGTDSEKPSEP.

Belongs to the Gfo/Idh/MocA family. Glycosyl hydrolase 109 subfamily. Requires NAD(+) as cofactor. Predicted to be exported by the Tat system. The position of the signal peptide cleavage has not been experimentally proven.

Glycosidase. The sequence is that of Glycosyl hydrolase family 109 protein from Streptomyces niveus (Streptomyces spheroides).